We begin with the raw amino-acid sequence, 219 residues long: Melanoma-associated antigen H1 (219 aa).

A compositionally biased stretch (basic residues) spans 1–13 (MPRGRKSRRRRNA). The disordered stretch occupies residues 1 to 84 (MPRGRKSRRR…QKPSVPRSNF (84 aa)). The 198-residue stretch at 1–198 (MPRGRKSRRR…KDWPCNYDWD (198 aa)) folds into the MAGE domain. Acidic residues predominate over residues 44–57 (PEDDLSGPEEDPST). Residues 58–74 (PEEASTTPEEASSTAQA) are compositionally biased toward low complexity. Y195 carries the phosphotyrosine modification.

The chain is Melanoma-associated antigen H1 (MAGEH1) from Homo sapiens (Human).